The following is a 149-amino-acid chain: Transcriptional repressor NrdR (149 aa).

A zinc finger spans residues 3-34; sequence CPFCAAEETKVVDSRLAADGYQIRRRRECTSC. Positions 49–139 constitute an ATP-cone domain; that stretch reads PYVIKNNGNR…VYLSFDDIEE (91 aa).

Belongs to the NrdR family. Zn(2+) is required as a cofactor.

Negatively regulates transcription of bacterial ribonucleotide reductase nrd genes and operons by binding to NrdR-boxes. The chain is Transcriptional repressor NrdR from Actinobacillus pleuropneumoniae serotype 5b (strain L20).